A 61-amino-acid chain; its full sequence is Metallothionein-2D (61 aa).

The residue at position 1 (Met-1) is an N-acetylmethionine. Positions Met-1–Cys-29 are beta. Residues Cys-5, Cys-7, Cys-13, Cys-15, Cys-19, Cys-21, Cys-24, Cys-26, Cys-29, Cys-33, Cys-34, Cys-36, Cys-37, Cys-41, Cys-44, Cys-48, Cys-50, Cys-57, Cys-59, and Cys-60 each coordinate a divalent metal cation. Positions Lys-30–Ala-61 are alpha.

Belongs to the metallothionein superfamily. Type 1 family. In terms of assembly, monomer.

Its function is as follows. Metallothioneins have a high content of cysteine residues that bind various heavy metals; these proteins are transcriptionally regulated by both heavy metals and glucocorticoids. This is Metallothionein-2D from Oryctolagus cuniculus (Rabbit).